We begin with the raw amino-acid sequence, 129 residues long: Small ribosomal subunit protein uS11 (129 aa).

Belongs to the universal ribosomal protein uS11 family. Part of the 30S ribosomal subunit. Interacts with proteins S7 and S18. Binds to IF-3.

Located on the platform of the 30S subunit, it bridges several disparate RNA helices of the 16S rRNA. Forms part of the Shine-Dalgarno cleft in the 70S ribosome. The sequence is that of Small ribosomal subunit protein uS11 from Buchnera aphidicola subsp. Baizongia pistaciae (strain Bp).